A 1819-amino-acid chain; its full sequence is U3 small nucleolar RNA-associated protein 10 (1819 aa).

The stretch at 583–620 (LDFQAILPFLLVALADPSERIRREAAAALAAIGGIYKK) is one HEAT 1 repeat. 2 helical membrane passes run 945–965 (IQSGMSYLLSLTLGSLLAIVN) and 1001–1021 (ALLLVSGLSVIAPELVLHSVM). HEAT repeat units lie at residues 1045-1082 (QTIDQVVPALIQSLRNQKRDVVSGTSELLLSFTAAFEH), 1269-1306 (LTLVDFLDTIEVLLQRPSDELRRKVLRLLEGRLRQNPE), 1313-1351 (IRVLDFLPTLVDIVRSSPDILLKHAAVACIDRIAEKYGK), and 1775-1812 (ALLPEMLPYISELMEDEDENVEREVRKWVKQIENVLGE).

This sequence belongs to the HEATR1/UTP10 family. In terms of assembly, component of the ribosomal small subunit (SSU) processome.

Its subcellular location is the nucleus. The protein localises to the nucleolus. It is found in the membrane. In terms of biological role, involved in nucleolar processing of pre-18S ribosomal RNA. Involved in ribosome biosynthesis. This chain is U3 small nucleolar RNA-associated protein 10, found in Aspergillus clavatus (strain ATCC 1007 / CBS 513.65 / DSM 816 / NCTC 3887 / NRRL 1 / QM 1276 / 107).